Reading from the N-terminus, the 588-residue chain is Catechol oxidase B, chloroplastic (588 aa).

The N-terminal 88 residues, 1 to 88 (SSSSTTTIPL…AANLAPLASA (88 aa)), are a transit peptide targeting the chloroplast. 2 disulfides stabilise this stretch: cysteine 99–cysteine 115 and cysteine 114–cysteine 181. Residues histidine 180, histidine 198, histidine 207, histidine 329, histidine 333, and histidine 364 each contribute to the Cu cation site. The 2'-(S-cysteinyl)-histidine (Cys-His) cross-link spans 184–198 (CNGAYKVGGKELQVH).

It belongs to the tyrosinase family. Requires Cu(2+) as cofactor.

Its subcellular location is the plastid. The protein localises to the chloroplast thylakoid lumen. It catalyses the reaction 2 catechol + O2 = 2 1,2-benzoquinone + 2 H2O. Catalyzes the oxidation of mono- and o-diphenols to o-diquinones. The chain is Catechol oxidase B, chloroplastic from Solanum tuberosum (Potato).